The following is a 404-amino-acid chain: Cysteine desulfurase IscS (404 aa).

Residues 85-86 (GT), asparagine 165, glutamine 193, 213-215 (SGH), and threonine 251 each bind pyridoxal 5'-phosphate. The active-site Cysteine persulfide intermediate is the cysteine 338. Cysteine 338 provides a ligand contact to [2Fe-2S] cluster.

This sequence belongs to the class-V pyridoxal-phosphate-dependent aminotransferase family. NifS/IscS subfamily. Homodimer. Forms a heterotetramer with IscU, interacts with other sulfur acceptors. It depends on pyridoxal 5'-phosphate as a cofactor.

Its subcellular location is the cytoplasm. The enzyme catalyses (sulfur carrier)-H + L-cysteine = (sulfur carrier)-SH + L-alanine. It participates in cofactor biosynthesis; iron-sulfur cluster biosynthesis. Its function is as follows. Master enzyme that delivers sulfur to a number of partners involved in Fe-S cluster assembly, tRNA modification or cofactor biosynthesis. Catalyzes the removal of elemental sulfur atoms from cysteine to produce alanine. Functions as a sulfur delivery protein for Fe-S cluster synthesis onto IscU, an Fe-S scaffold assembly protein, as well as other S acceptor proteins. The chain is Cysteine desulfurase IscS from Methanosarcina thermophila.